The primary structure comprises 335 residues: Nucleoid-associated protein YejK (335 aa).

Belongs to the YejK family.

Its subcellular location is the cytoplasm. The protein localises to the nucleoid. This is Nucleoid-associated protein YejK from Salmonella schwarzengrund (strain CVM19633).